The following is a 320-amino-acid chain: Solute carrier family 25 member 33 (320 aa).

Solcar repeat units lie at residues 9–118, 126–213, and 231–315; these read ENTL…AKEQ, NSNT…LKKC, and SGFF…IVYL. Transmembrane regions (helical) follow at residues 12 to 32, 49 to 65, 121 to 141, 190 to 210, 233 to 253, and 298 to 318; these read LLHLFAGGCGGTVGAIFTCPL, VYYPQVHLGTISGAGMV, GIFVPNSNTVHILSAGSAAFV, LTASYAGISETIICFAIYESL, FFGLMAAAAVSKGCASCIAYP, and QIPNTAIVLSTYEFIVYLLGE.

This sequence belongs to the mitochondrial carrier (TC 2.A.29) family.

The protein resides in the mitochondrion inner membrane. The enzyme catalyses UTP(in) + UDP(out) = UTP(out) + UDP(in). The catalysed reaction is dUTP(out) + UTP(in) = dUTP(in) + UTP(out). It catalyses the reaction 5-methyl-UTP(out) + UTP(in) = 5-methyl-UTP(in) + UTP(out). It carries out the reaction 5-methyl-UDP(out) + UTP(in) = 5-methyl-UDP(in) + UTP(out). The enzyme catalyses UTP(in) + CTP(out) = UTP(out) + CTP(in). The catalysed reaction is CDP(out) + UTP(in) = CDP(in) + UTP(out). It catalyses the reaction dCTP(out) + UTP(in) = dCTP(in) + UTP(out). It carries out the reaction dCDP(out) + UTP(in) = dCDP(in) + UTP(out). The enzyme catalyses UTP(in) + GTP(out) = UTP(out) + GTP(in). The catalysed reaction is UTP(in) + GDP(out) = UTP(out) + GDP(in). It catalyses the reaction dGTP(out) + UTP(in) = dGTP(in) + UTP(out). It carries out the reaction dGDP(out) + UTP(in) = dGDP(in) + UTP(out). The enzyme catalyses ITP(out) + UTP(in) = ITP(in) + UTP(out). Functionally, mitochondrial transporter that imports/exports pyrimidine nucleotides into and from mitochondria. Selectively transports uridine, thymidine, guanosine, cytosine and inosine (deoxy)nucleoside di- and triphosphates by an antiport mechanism. May import (deoxy)nucleoside triphosphates in exchange for intramitochondrial (deoxy)nucleoside diphosphates, thus providing precursors necessary for de novo synthesis of mitochondrial DNA and RNA while exporting products of their catabolism. Participates in mitochondrial genome maintenance, regulation of mitochondrial membrane potential and mitochondrial respiration. Upon INS or IGF1 stimulation regulates cell growth and proliferation by controlling mitochondrial DNA replication and transcription, the ratio of mitochondria-to nuclear-encoded components of the electron transport chain resulting in control of mitochondrial ROS production. Participates in dendritic cell endocytosis and may associate with mitochondrial oxidative phosphorylation. The protein is Solute carrier family 25 member 33 (Slc25a33) of Mus musculus (Mouse).